A 555-amino-acid chain; its full sequence is Bifunctional epoxide hydrolase 2 (555 aa).

The interval 1 to 224 (MTLRAAVFDL…KVTGIQLLNT (224 aa)) is phosphatase. D9 and D11 together coordinate Mg(2+). The residue at position 43 (K43) is an N6-acetyllysine. An N6-succinyllysine modification is found at K55. 123–124 (TN) is a phosphate binding site. D185 is a binding site for Mg(2+). Residues K191 and K215 each carry the N6-acetyllysine modification. Positions 235 to 555 (SDMSHGYVTV…ARNPPVVSKM (321 aa)) are epoxide hydrolase. The region spanning 259 to 531 (PAVCLCHGFP…CGHWTQMDKP (273 aa)) is the AB hydrolase-1 domain. The Nucleophile role is filled by D335. Residue S370 is modified to Phosphoserine. Y383 contributes to the substrate binding site. 2 positions are modified to N6-succinyllysine: K421 and K455. Y466 (proton donor) is an active-site residue. A lipid anchor (S-(15-deoxy-Delta12,14-prostaglandin J2-9-yl)cysteine) is attached at C522. Catalysis depends on H524, which acts as the Proton acceptor. A Microbody targeting signal motif is present at residues 553 to 555 (SKM). N6-succinyllysine is present on K554.

This sequence belongs to the AB hydrolase superfamily. Epoxide hydrolase family. As to quaternary structure, homodimer. The cofactor is Mg(2+). The N-terminus is blocked. Post-translationally, the covalent modification of cysteine by 15-deoxy-Delta12,14-prostaglandin-J2 is autocatalytic and reversible. It may occur as an alternative to other cysteine modifications, such as S-nitrosylation and S-palmitoylation.

It localises to the cytoplasm. The protein resides in the peroxisome. It catalyses the reaction an epoxide + H2O = an ethanediol. It carries out the reaction (9S,10S)-10-hydroxy-9-(phosphooxy)octadecanoate + H2O = (9S,10S)-9,10-dihydroxyoctadecanoate + phosphate. The catalysed reaction is 12-phosphooxy-(9Z)-octadecenoate + H2O = 12-hydroxy-(9Z)-octadecenoate + phosphate. The enzyme catalyses 12-phosphooxy-(9E)-octadecenoate + H2O = 12-hydroxy-(9E)-octadecenoate + phosphate. It catalyses the reaction 12-(phosphooxy)octadecanoate + H2O = 12-hydroxyoctadecanoate + phosphate. It carries out the reaction 8,9-epoxy-(5Z,11Z,14Z)-eicosatrienoate + H2O = 8,9-dihydroxy-(5Z,11Z,14Z)-eicosatrienoate. The catalysed reaction is 11,12-epoxy-(5Z,8Z,14Z)-eicosatrienoate + H2O = 11,12-dihydroxy-(5Z,8Z,14Z)-eicosatrienoate. The enzyme catalyses 14,15-epoxy-(5Z,8Z,11Z)-eicosatrienoate + H2O = 14,15-dihydroxy-(5Z,8Z,11Z)-eicosatrienoate. It catalyses the reaction 9,10-epoxy-(12Z)-octadecenoate + H2O = 9,10-dihydroxy-(12Z)-octadecenoate. It carries out the reaction 8-hydroxy-(11S,12S)-epoxy-(5Z,9E,14Z)-eicosatrienoate + H2O = (8,11R,12S)-trihydroxy-(5Z,9E,14Z)-eicosatrienoate. The catalysed reaction is 10-hydroxy-(11S,12S)-epoxy- (5Z,8Z,14Z)-eicosatrienoate + H2O = (10,11S,12R)-trihydroxy-(5Z,8Z,14Z)-eicosatrienoate. The enzyme catalyses 1-tetradecanoyl-sn-glycerol 3-phosphate + H2O = 1-tetradecanoyl-sn-glycerol + phosphate. It catalyses the reaction 1-octadecanoyl-sn-glycero-3-phosphate + H2O = 1-octadecanoyl-sn-glycerol + phosphate. It carries out the reaction 1-(5Z,8Z,11Z,14Z-eicosatetraenoyl)-sn-glycero-3-phosphate + H2O = 1-(5Z,8Z,11Z,14Z-eicosatetraenoyl)-sn-glycerol + phosphate. The catalysed reaction is 1-hexadecanoyl-sn-glycero-3-phosphate + H2O = 1-hexadecanoyl-sn-glycerol + phosphate. The enzyme catalyses 1-(9Z-octadecenoyl)-sn-glycero-3-phosphate + H2O = 1-(9Z-octadecenoyl)-sn-glycerol + phosphate. It catalyses the reaction (8S,9R)-epoxy-(5Z,11Z,14Z)-eicosatrienoate + H2O = (8S,9S)-dihydroxy-(5Z,11Z,14Z)-eicosatrienoate. It carries out the reaction (11S,12R)-epoxy-(5Z,8Z,14Z)-eicosatrienoate + H2O = (11R,12R)-dihydroxy-(5Z,8Z,14Z)-eicosatrienoate. The catalysed reaction is (11S,12R)-epoxy-(5Z,8Z,14Z)-eicosatrienoate + H2O = (11S,12S)-dihydroxy-(5Z,8Z,14Z)-eicosatrienoate. The enzyme catalyses (14S,15R)-epoxy-(5Z,8Z,11Z)-eicosatrienoate + H2O = (14R,15R)-dihydroxy-(5Z,8Z,11Z)-eicosatrienoate. It catalyses the reaction (14S,15R)-epoxy-(5Z,8Z,11Z)-eicosatrienoate + H2O = (14S,15S)-dihydroxy-(5Z,8Z,11Z)-eicosatrienoate. It carries out the reaction (11R,12S)-epoxy-(5Z,8Z,14Z)-eicosatrienoate + H2O = (11S,12S)-dihydroxy-(5Z,8Z,14Z)-eicosatrienoate. The catalysed reaction is (11R,12S)-epoxy-(5Z,8Z,14Z)-eicosatrienoate + H2O = (11R,12R)-dihydroxy-(5Z,8Z,14Z)-eicosatrienoate. The enzyme catalyses (8S,9R)-epoxy-(5Z,11Z,14Z)-eicosatrienoate + H2O = (8R,9R)-dihydroxy-(5Z,11Z,14Z)-eicosatrienoate. It catalyses the reaction (14R,15S)-epoxy-(5Z,8Z,11Z)-eicosatrienoate + H2O = (14R,15R)-dihydroxy-(5Z,8Z,11Z)-eicosatrienoate. Its activity is regulated as follows. Inhibited by 1-(1-acetylpiperidin-4-yl)-3-(4-(trifl uoromethoxy)phenyl)urea (TPAU), 1-cyclohexyl-3-dodecylurea (CDU), 12-(3-adamantan-1-yl-ureido)-dodecanoic acid (AUDA), 1-((3S, 5S, 7S)-adamantan-1-yl)-3-(5-(2-(2-ethoxyethoxy) ethoxy)pentyl)urea (AEPU), N-adamantyl-N[']-cyclohexyl urea (ACU), 4-(((1S, 4S)-4-(3-((3S, 5S, 7S)-adamantan-1-yl) ureido)cyclohexyl)oxy)benzoic acid (c-AUCB), 4-(((1R, 4R)-4-(3-((3S, 5S, 7S)-adamantan-1-yl)ureido)cyclohexyl)oxy)benzoic acid (t-AUCB), 4-(((1R, 4R)-4-(3-(4(trifluoromethoxy)phenyl)ureido)cyclohexyl)oxy)benzoic acid (t-TAUCB) and to a lesser extent by 8-(3-((3S, 5S, 7S)-adamantan-1-yl)ureido) octanoic acid (AUOA). Phosphatase activity is inhibited by dodecyl-phosphate, phospholipids such as phospho-lysophosphatidic acids and fatty acids such as palmitic acid and lauric acid. Bifunctional enzyme. The C-terminal domain has epoxide hydrolase activity and acts on epoxides (alkene oxides, oxiranes) and arene oxides. Plays a role in xenobiotic metabolism by degrading potentially toxic epoxides. Also determines steady-state levels of physiological mediators. In terms of biological role, bifunctional enzyme. The N-terminal domain has lipid phosphatase activity, with the highest activity towards threo-9,10-phosphonooxy-hydroxy-octadecanoic acid, followed by erythro-9,10-phosphonooxy-hydroxy-octadecanoic acid, 12-phosphonooxy-octadec-9Z-enoic acid and 12-phosphonooxy-octadec-9E-enoic acid. Has phosphatase activity toward lyso-glycerophospholipids with also some lower activity toward lysolipids of sphingolipid and isoprenoid phosphates. This is Bifunctional epoxide hydrolase 2 from Homo sapiens (Human).